We begin with the raw amino-acid sequence, 430 residues long: MKKRLTTSTCSSSPSSSVSSSTTTSSPIQSEAPRPKRAKRAKKSSPSGDKSHNPTSPASTRRSSIYRGVTRHRWTGRFEAHLWDKSSWNSIQNKKGKQVYLGAYDSEEAAAHTYDLAALKYWGPDTILNFPAETYTKELEEMQRVTKEEYLASLRRQSSGFSRGVSKYRGVARHHHNGRWEARIGRVFGNKYLYLGTYNTQEEAAAAYDMAAIEYRGANAVTNFDISNYIDRLKKKGVFPFPVNQANHQEGILVEAKQEVETREAKEEPREEVKQQYVEEPPQEEEEKEEEKAEQQEAEIVGYSEEAAVVNCCIDSSTIMEMDRCGDNNELAWNFCMMDTGFSPFLTDQNLANENPIEYPELFNELAFEDNIDFMFDDGKHECLNLENLDCCVVGRESPPSSSSPLSCLSTDSASSTTTTTTSVSCNYLV.

Low complexity predominate over residues methionine 1–serine 26. Residues methionine 1–tyrosine 66 are disordered. Positions asparagine 53–serine 63 are enriched in polar residues. The AP2/ERF 1 DNA-binding region spans isoleucine 65–proline 131. A Phosphothreonine; by KIN10 modification is found at threonine 70. Position 166 is a phosphoserine; by KIN10 (serine 166). Residues lysine 167–aspartate 225 constitute a DNA-binding region (AP2/ERF 2). The segment covering valine 260–lysine 274 has biased composition (basic and acidic residues). 2 disordered regions span residues valine 260–glutamate 297 and serine 398–threonine 422.

It belongs to the AP2/ERF transcription factor family. AP2 subfamily. Interacts with KIN10 and KIN11. Post-translationally, ubiquitinated. The phosphorylation at Thr-70 and Ser-166 by KIN10 facilitates its degradation via the proteasomal pathway. In terms of tissue distribution, mostly expressed in siliques, especially in seeds. Also detected in roots and flowers, and, to a lower extent, in leaves stems and seedlings.

The protein resides in the nucleus. Its activity is regulated as follows. Down-regulated by KIN10 that controls its protein stability under a phosphorylation-dependent manner. In terms of biological role, may be involved in the regulation of gene expression by stress factors and by components of stress signal transduction pathways. Transcriptional activator involved in the activation of a subset of sugar-responsive genes and the control of carbon flow from sucrose import to oil accumulation in developing seeds. Binds to the GCC-box pathogenesis-related promoter element. Promotes sugar uptake and seed oil accumulation by glycolysis. Required for embryo development, seed germination and, indirectly, for seedling establishment. Negative regulator of the ABA-mediated germination inhibition. This is Ethylene-responsive transcription factor WRI1 (WRI1) from Arabidopsis thaliana (Mouse-ear cress).